The primary structure comprises 399 residues: 1-deoxy-D-xylulose 5-phosphate reductoisomerase (399 aa).

NADPH is bound by residues Thr13, Gly14, Ser15, Ile16, and Asn127. 1-deoxy-D-xylulose 5-phosphate is bound at residue Lys128. NADPH is bound at residue Glu129. Mn(2+) is bound at residue Asp153. Ser154, Glu155, Ser187, and His210 together coordinate 1-deoxy-D-xylulose 5-phosphate. Glu155 contacts Mn(2+). Position 216 (Gly216) interacts with NADPH. Residues Ser223, Asn228, Lys229, and Glu232 each contribute to the 1-deoxy-D-xylulose 5-phosphate site. Residue Glu232 coordinates Mn(2+).

This sequence belongs to the DXR family. Mg(2+) serves as cofactor. Requires Mn(2+) as cofactor.

The catalysed reaction is 2-C-methyl-D-erythritol 4-phosphate + NADP(+) = 1-deoxy-D-xylulose 5-phosphate + NADPH + H(+). It functions in the pathway isoprenoid biosynthesis; isopentenyl diphosphate biosynthesis via DXP pathway; isopentenyl diphosphate from 1-deoxy-D-xylulose 5-phosphate: step 1/6. Its function is as follows. Catalyzes the NADPH-dependent rearrangement and reduction of 1-deoxy-D-xylulose-5-phosphate (DXP) to 2-C-methyl-D-erythritol 4-phosphate (MEP). This is 1-deoxy-D-xylulose 5-phosphate reductoisomerase from Bordetella parapertussis (strain 12822 / ATCC BAA-587 / NCTC 13253).